Here is a 670-residue protein sequence, read N- to C-terminus: Protein HBS1 (670 aa).

2 disordered regions span residues 60–88 (KDIQ…ESFQ) and 164–202 (KTVS…VSGR). Positions 63-75 (QEEEADEDEDEDA) are enriched in acidic residues. Residues 189-200 (PSPKVPSSPVVS) show a composition bias toward low complexity. The tr-type G domain maps to 245 to 468 (KSHIHMIVIG…DVIENFKIPE (224 aa)). The segment at 254 to 261 (GHVDAGKS) is G1. Position 254-261 (254-261 (GHVDAGKS)) interacts with GTP. The interval 310 to 314 (GITMD) is G2. Positions 331–334 (DAPG) are G3. GTP is bound by residues 393–396 (NKLD) and 432–434 (SGL). Positions 393 to 396 (NKLD) are G4. The tract at residues 432-434 (SGL) is G5.

It belongs to the TRAFAC class translation factor GTPase superfamily. Classic translation factor GTPase family. In terms of assembly, component of the Pelota-HBS1L complex, also named Dom34-Hbs1 complex, composed of pelo and HBS1. As to expression, expressed in ovaries (at protein level).

The protein resides in the cytoplasm. It carries out the reaction GTP + H2O = GDP + phosphate + H(+). Its function is as follows. GTPase component of the Pelota-HBS1L complex, a complex that recognizes stalled ribosomes and triggers the No-Go Decay (NGD) pathway. The Pelota-HBS1L complex recognizes ribosomes stalled at the 3' end of an mRNA and engages stalled ribosomes by destabilizing mRNA in the mRNA channel. Following ribosome-binding, the Pelota-HBS1L complex promotes recruitment of pix, which drives the disassembly of stalled ribosomes, followed by degradation of damaged mRNAs as part of the NGD pathway. Together with pelo, required for transposon silencing in the ovary and testis. Together with pelo, promotes meiosis and spermatid individualization during spermatogenesis. This chain is Protein HBS1, found in Drosophila melanogaster (Fruit fly).